Here is a 256-residue protein sequence, read N- to C-terminus: ATP synthase subunit a (256 aa).

6 helical membrane passes run 33 to 53 (ITTF…LTLL), 92 to 112 (YFPL…IGMI), 122 to 142 (MVFI…IGLY), 148 to 168 (FFAL…LVLI), 191 to 211 (GHLL…VSIV), and 235 to 255 (MIQS…GLYL).

This sequence belongs to the ATPase A chain family. As to quaternary structure, F-type ATPases have 2 components, CF(1) - the catalytic core - and CF(0) - the membrane proton channel. CF(1) has five subunits: alpha(3), beta(3), gamma(1), delta(1), epsilon(1). CF(0) has three main subunits: a, b and c.

It is found in the mitochondrion inner membrane. Its function is as follows. Mitochondrial membrane ATP synthase (F(1)F(0) ATP synthase or Complex V) produces ATP from ADP in the presence of a proton gradient across the membrane which is generated by electron transport complexes of the respiratory chain. F-type ATPases consist of two structural domains, F(1) - containing the extramembraneous catalytic core and F(0) - containing the membrane proton channel, linked together by a central stalk and a peripheral stalk. During catalysis, ATP synthesis in the catalytic domain of F(1) is coupled via a rotary mechanism of the central stalk subunits to proton translocation. Key component of the proton channel; it may play a direct role in the translocation of protons across the membrane. This chain is ATP synthase subunit a (ATP6), found in Wickerhamomyces canadensis (Yeast).